The chain runs to 191 residues: TATA-box-binding protein (191 aa).

A run of 2 repeats spans residues 18-94 and 108-185.

The protein belongs to the TBP family. Belongs to the TFIID complex together with the TBP-associated factors (TAFs). Binds DNA as monomer.

The protein resides in the nucleus. Functionally, general transcription factor that functions at the core of the DNA-binding multiprotein factor TFIID. Binding of TFIID to the TATA box is the initial transcriptional step of the pre-initiation complex (PIC), playing a role in the activation of eukaryotic genes transcribed by RNA polymerase II. In Acetabularia peniculus (Green alga), this protein is TATA-box-binding protein.